The sequence spans 230 residues: Urease accessory protein UreE (230 aa).

Residues 197–230 form a disordered region; it reads LHIHAIHSHGDGDSHNHDHDHSHSHGDHDHDHKH. Positions 204 to 230 are enriched in basic and acidic residues; the sequence is SHGDGDSHNHDHDHSHSHGDHDHDHKH.

Belongs to the UreE family.

It is found in the cytoplasm. Its function is as follows. Involved in urease metallocenter assembly. Binds nickel. Probably functions as a nickel donor during metallocenter assembly. The polypeptide is Urease accessory protein UreE (Yersinia aldovae).